The chain runs to 327 residues: Glycerol-3-phosphate dehydrogenase [NAD(P)+] (327 aa).

F13, R34, and K107 together coordinate NADPH. Residues K107 and G135 each coordinate sn-glycerol 3-phosphate. A139 lines the NADPH pocket. Positions 190, 243, 253, 254, and 255 each coordinate sn-glycerol 3-phosphate. K190 functions as the Proton acceptor in the catalytic mechanism. R254 is an NADPH binding site. Residues V276 and E277 each contribute to the NADPH site.

The protein belongs to the NAD-dependent glycerol-3-phosphate dehydrogenase family.

Its subcellular location is the cytoplasm. The catalysed reaction is sn-glycerol 3-phosphate + NAD(+) = dihydroxyacetone phosphate + NADH + H(+). It carries out the reaction sn-glycerol 3-phosphate + NADP(+) = dihydroxyacetone phosphate + NADPH + H(+). It participates in membrane lipid metabolism; glycerophospholipid metabolism. Catalyzes the reduction of the glycolytic intermediate dihydroxyacetone phosphate (DHAP) to sn-glycerol 3-phosphate (G3P), the key precursor for phospholipid synthesis. This is Glycerol-3-phosphate dehydrogenase [NAD(P)+] from Rhizobium etli (strain CIAT 652).